The chain runs to 356 residues: Vacuolar protein sorting-associated protein 26 (356 aa).

Residues 301-356 (MRRPGTEDDEEEKQTTSIPGTQKFTAPAPVEHPKPESPRSDPKSGSTSPDDNSDSS) form a disordered region. The segment covering 315–324 (TTSIPGTQKF) has biased composition (polar residues). Residues 331–342 (EHPKPESPRSDP) show a composition bias toward basic and acidic residues.

It belongs to the VPS26 family.

May play a role in vesicular protein sorting, similar to the yeast retromer proteins. This chain is Vacuolar protein sorting-associated protein 26 (vps-26), found in Caenorhabditis elegans.